A 95-amino-acid chain; its full sequence is Protein K6 (95 aa).

Residues 1–24 form the signal peptide; it reads MAPVHVLCCVSVLLATFYLTPTES.

This is Protein K6 (K6) from Human herpesvirus 8 type P (isolate GK18) (HHV-8).